The following is a 295-amino-acid chain: Glutamyl-Q tRNA(Asp) synthetase (295 aa).

L-glutamate is bound by residues 9 to 13 (RFAPT) and Glu45. The 'HIGH' region signature appears at 12 to 22 (PTPSGYLHFGS). Residues Cys101, Cys103, Tyr115, and Cys119 each coordinate Zn(2+). L-glutamate-binding residues include Tyr172 and Arg190. A 'KMSKS' region motif is present at residues 228 to 232 (KLGKS). Lys231 serves as a coordination point for ATP.

It belongs to the class-I aminoacyl-tRNA synthetase family. GluQ subfamily. The cofactor is Zn(2+).

Catalyzes the tRNA-independent activation of glutamate in presence of ATP and the subsequent transfer of glutamate onto a tRNA(Asp). Glutamate is transferred on the 2-amino-5-(4,5-dihydroxy-2-cyclopenten-1-yl) moiety of the queuosine in the wobble position of the QUC anticodon. This Pseudomonas syringae pv. syringae (strain B728a) protein is Glutamyl-Q tRNA(Asp) synthetase.